A 205-amino-acid chain; its full sequence is Holliday junction branch migration complex subunit RuvA (205 aa).

A domain I region spans residues 1–64 (MIGRLRGIIL…EDAQLLFGFN (64 aa)). The tract at residues 65–143 (DKQERALFRE…GLSGDLFNSV (79 aa)) is domain II. A flexible linker region spans residues 144 to 156 (SDIPLTSPANVDN). The interval 157–205 (RVGEPEAEAAAALVALGYKPQEASRMISKIARPDADCETLIRDALRAAL) is domain III.

It belongs to the RuvA family. Homotetramer. Forms an RuvA(8)-RuvB(12)-Holliday junction (HJ) complex. HJ DNA is sandwiched between 2 RuvA tetramers; dsDNA enters through RuvA and exits via RuvB. An RuvB hexamer assembles on each DNA strand where it exits the tetramer. Each RuvB hexamer is contacted by two RuvA subunits (via domain III) on 2 adjacent RuvB subunits; this complex drives branch migration. In the full resolvosome a probable DNA-RuvA(4)-RuvB(12)-RuvC(2) complex forms which resolves the HJ.

It localises to the cytoplasm. The RuvA-RuvB-RuvC complex processes Holliday junction (HJ) DNA during genetic recombination and DNA repair, while the RuvA-RuvB complex plays an important role in the rescue of blocked DNA replication forks via replication fork reversal (RFR). RuvA specifically binds to HJ cruciform DNA, conferring on it an open structure. The RuvB hexamer acts as an ATP-dependent pump, pulling dsDNA into and through the RuvAB complex. HJ branch migration allows RuvC to scan DNA until it finds its consensus sequence, where it cleaves and resolves the cruciform DNA. In Pectobacterium atrosepticum (strain SCRI 1043 / ATCC BAA-672) (Erwinia carotovora subsp. atroseptica), this protein is Holliday junction branch migration complex subunit RuvA.